The sequence spans 415 residues: DNA polymerase IV (415 aa).

One can recognise a UmuC domain in the interval 15 to 196 (ILHVDMNCFF…LSVEAMHGIG (182 aa)). 2 residues coordinate Mg(2+): D19 and D115. Residue E116 is part of the active site. The segment covering 235–246 (KRAKGTDDREVD) has biased composition (basic and acidic residues). The segment at 235–260 (KRAKGTDDREVDPSQMGQHKSVGNSM) is disordered. The segment covering 249 to 260 (QMGQHKSVGNSM) has biased composition (polar residues).

Belongs to the DNA polymerase type-Y family. As to quaternary structure, monomer. It depends on Mg(2+) as a cofactor.

It is found in the cytoplasm. The enzyme catalyses DNA(n) + a 2'-deoxyribonucleoside 5'-triphosphate = DNA(n+1) + diphosphate. Its function is as follows. Poorly processive, error-prone DNA polymerase involved in untargeted mutagenesis. Copies undamaged DNA at stalled replication forks, which arise in vivo from mismatched or misaligned primer ends. These misaligned primers can be extended by PolIV. Exhibits no 3'-5' exonuclease (proofreading) activity. May be involved in translesional synthesis, in conjunction with the beta clamp from PolIII. This chain is DNA polymerase IV, found in Bacillus cereus (strain ATCC 14579 / DSM 31 / CCUG 7414 / JCM 2152 / NBRC 15305 / NCIMB 9373 / NCTC 2599 / NRRL B-3711).